The sequence spans 332 residues: Ketol-acid reductoisomerase (NAD(+)) (332 aa).

One can recognise a KARI N-terminal Rossmann domain in the interval 1–186; sequence MEILHDEDVD…HWTKAGILEC (186 aa). NAD(+) is bound by residues 24 to 27, Glu46, Asn55, Ser57, and 87 to 90; these read YGAQ and DEVQ. Residue His112 is part of the active site. Residue Gly138 participates in NAD(+) binding. One can recognise a KARI C-terminal knotted domain in the interval 187–332; sequence TFEQETYEDL…AEIRKLFAQK (146 aa). Mg(2+)-binding residues include Asp195, Glu199, Glu231, and Glu235. Ser256 lines the substrate pocket.

This sequence belongs to the ketol-acid reductoisomerase family. As to quaternary structure, homodimer. It depends on Mg(2+) as a cofactor.

It carries out the reaction (2R)-2,3-dihydroxy-3-methylbutanoate + NAD(+) = (2S)-2-acetolactate + NADH + H(+). It functions in the pathway amino-acid biosynthesis; L-isoleucine biosynthesis; L-isoleucine from 2-oxobutanoate: step 2/4. It participates in amino-acid biosynthesis; L-valine biosynthesis; L-valine from pyruvate: step 2/4. In terms of biological role, involved in the biosynthesis of branched-chain amino acids (BCAA). Catalyzes an alkyl-migration followed by a ketol-acid reduction of (S)-2-acetolactate (S2AL) to yield (R)-2,3-dihydroxy-isovalerate. In the isomerase reaction, S2AL is rearranged via a Mg-dependent methyl migration to produce 3-hydroxy-3-methyl-2-ketobutyrate (HMKB). In the reductase reaction, this 2-ketoacid undergoes a metal-dependent reduction by NADH to yield (R)-2,3-dihydroxy-isovalerate. In Uncultured archaeon GZfos26G2, this protein is Ketol-acid reductoisomerase (NAD(+)).